The chain runs to 253 residues: Probable transcriptional regulatory protein RC0681 (253 aa).

A disordered region spans residues 1-21 (MAGHSKFKNIQHRKGAQDKKR).

It belongs to the TACO1 family.

The protein resides in the cytoplasm. In Rickettsia conorii (strain ATCC VR-613 / Malish 7), this protein is Probable transcriptional regulatory protein RC0681.